The sequence spans 1366 residues: DNA-directed RNA polymerase subunit beta' (1366 aa).

Positions 1-23 (MTSSKPKKSSRVRKTTKNSKKNH) are enriched in basic residues. The disordered stretch occupies residues 1–37 (MTSSKPKKSSRVRKTTKNSKKNHNTMMPLLPKTPPSF). Positions 248, 315, 322, and 325 each coordinate Zn(2+). The tract at residues 1304–1366 (TAILDDPSDE…LQEEGLLSDG (63 aa)) is disordered. Positions 1354–1366 (LEGLQEEGLLSDG) are enriched in low complexity.

It belongs to the RNA polymerase beta' chain family. RpoC2 subfamily. In terms of assembly, in cyanobacteria the RNAP catalytic core is composed of 2 alpha, 1 beta, 1 beta', 1 gamma and 1 omega subunit. When a sigma factor is associated with the core the holoenzyme is formed, which can initiate transcription. Zn(2+) is required as a cofactor.

The catalysed reaction is RNA(n) + a ribonucleoside 5'-triphosphate = RNA(n+1) + diphosphate. Its function is as follows. DNA-dependent RNA polymerase catalyzes the transcription of DNA into RNA using the four ribonucleoside triphosphates as substrates. The polypeptide is DNA-directed RNA polymerase subunit beta' (Prochlorococcus marinus subsp. pastoris (strain CCMP1986 / NIES-2087 / MED4)).